Here is a 282-residue protein sequence, read N- to C-terminus: Structure-specific endonuclease subunit slx1 (282 aa).

One can recognise a GIY-YIG domain in the interval 7–97 (GFYGVYLLFC…RLTHVPRKTK (91 aa)). The SLX1-type zinc finger occupies 191-243 (CRVCYERVQDKDDSLHCFHPGCTLTAHIMCLAKLFLLNEPQNLIPVEGLCPSC).

It belongs to the SLX1 family. Forms a heterodimer with slx4. A divalent metal cation serves as cofactor.

Its subcellular location is the nucleus. In terms of biological role, catalytic subunit of the slx1-slx4 structure-specific endonuclease that resolves DNA secondary structures generated during DNA repair and recombination. Has endonuclease activity towards branched DNA substrates, introducing single-strand cuts in duplex DNA close to junctions with ss-DNA. This chain is Structure-specific endonuclease subunit slx1 (slx1a), found in Xenopus laevis (African clawed frog).